The sequence spans 626 residues: Basic helix-loop-helix ARNT-like protein 1 (626 aa).

Residues 1-60 (MADQRMDISSTISDFMSPGPTDLLSSSLGTSGVDCNRKRKGSSTDYQESMDTDKDDPHGR) are disordered. Residue Ser-17 is modified to Phosphoserine; by GSK3-beta. A compositionally biased stretch (low complexity) spans 17-32 (SPGPTDLLSSSLGTSG). Thr-21 carries the phosphothreonine; by GSK3-beta modification. The short motif at 36–41 (NRKRKG) is the Nuclear localization signal element. The span at 51–60 (DTDKDDPHGR) shows a compositional bias: basic and acidic residues. The bHLH domain occupies 72-125 (NAREAHSQIEKRRRDKMNSFIDELASLVPTCNAMSRKLDKLTVLRMAVQHMKTL). A Phosphoserine modification is found at Ser-78. Ser-90 is subject to Phosphoserine; by CK2. The Nuclear export signal 1 signature appears at 142–152 (LSDDELKHLIL). The PAS 1 domain maps to 143 to 215 (SDDELKHLIL…EQLSSSDTAP (73 aa)). Lys-252 is covalently cross-linked (Glycyl lysine isopeptide (Lys-Gly) (interchain with G-Cter in SUMO2 and SUMO3)). Lys-259 is covalently cross-linked (Glycyl lysine isopeptide (Lys-Gly) (interchain with G-Cter in SUMO2)). Positions 326–396 (PQPVNGEIRV…ECHRQVLQTR (71 aa)) constitute a PAS 2 domain. Positions 361–369 (LAYLPQELL) match the Nuclear export signal 2 motif. Positions 401-444 (TNCYKFKIKDGSFITLRSRWFSFMNPWTKEVEYIVSTNTVVLAN) constitute a PAC domain. 2 disordered regions span residues 458–493 (ASPHSMDSMLPSGEGGPKRTHPTVPGIPGGTRAGAG) and 511–595 (GSSP…SPSN). A compositionally biased stretch (gly residues) spans 484 to 493 (IPGGTRAGAG). Positions 508–588 (RIRGSSPSSC…IGIDMIDNDQ (81 aa)) are interaction with CIART. Over residues 511–521 (GSSPSSCGSSP) the composition is skewed to low complexity. An N6-acetyllysine modification is found at Lys-538.

Component of the circadian clock oscillator which includes the CRY1/2 proteins, CLOCK or NPAS2,BMAL1 or BMAL2, CSNK1D and/or CSNK1E, TIMELESS and the PER1/2/3 proteins. Forms a heterodimer with CLOCK. The CLOCK-BMAL1 heterodimer is required for E-box-dependent transactivation, for CLOCK nuclear translocation and degradation, and, for phosphorylation of both CLOCK and BMAL1. Part of a nuclear complex which also includes RACK1 and PRKCA; RACK1 and PRKCA are recruited to the complex in a circadian manner. Interacts with NPAS2. Interacts with EZH2. Interacts with SUMO3. Interacts with SIRT1. Interacts with AHR. Interacts with ID1, ID2 and ID3. Interacts with DDX4. Interacts with OGT. Interacts with EED and SUZ12. Interacts with MTA1. Interacts with CIART. Interacts with HSP90. Interacts with KAT2B and EP300. Interacts with BHLHE40/DEC1 and BHLHE41/DEC2. Interacts with RELB and the interaction is enhanced in the presence of CLOCK. Interacts with PER1, PER2, CRY1 and CRY2 and this interaction requires a translocation to the nucleus. Interaction of the CLOCK-BMAL1 heterodimer with PER or CRY inhibits transcription activation. Interaction of the CLOCK-BMAL1 with CRY1 is independent of DNA but with PER2 is off DNA. The CLOCK-BMAL1 heterodimer interacts with GSK3B. Interacts with KDM5A. Interacts with KMT2A; in a circadian manner. Interacts with UBE3A. Interacts with PRKCG. Interacts with MAGEL2. Interacts with NCOA2. Interacts with THRAP3. The CLOCK-BMAL1 heterodimer interacts with PASD1. Interacts with PASD1. Interacts with USP9X. Interacts with PIWIL2 (via PIWI domain). Interacts with HDAC3. Interacts with HNF4A. Post-translationally, ubiquitinated, leading to its proteasomal degradation. Deubiquitinated by USP9X. In terms of processing, O-glycosylated; contains O-GlcNAc. O-glycosylation by OGT prevents protein degradation by inhibiting ubiquitination. It also stabilizes the CLOCK-BMAL1 heterodimer thereby increasing CLOCK-BMAL1-mediated transcription of genes in the negative loop of the circadian clock such as PER1/2/3 and CRY1/2. Acetylated on Lys-538 by CLOCK during the repression phase of the circadian cycle. Acetylation facilitates recruitment of CRY1 protein and initiates the repression phase of the circadian cycle. Acetylated at Lys-538 by KAT5 during the activation phase of the cycle, leading to recruitment of the positive transcription elongation factor b (P-TEFb) and BRD4, followed by productive elongation of circadian transcripts. Deacetylated by SIRT1, which may result in decreased protein stability. Post-translationally, phosphorylated upon dimerization with CLOCK. Phosphorylation enhances the transcriptional activity, alters the subcellular localization and decreases the stability of the CLOCK-BMAL1 heterodimer by promoting its degradation. Phosphorylation shows circadian variations in the liver with a peak between CT10 to CT14. Phosphorylation at Ser-90 by CK2 is essential for its nuclear localization, its interaction with CLOCK and controls CLOCK nuclear entry. Dephosphorylation at Ser-78 is important for dimerization with CLOCK and transcriptional activity. In terms of processing, sumoylated on Lys-259 upon dimerization with CLOCK. Predominantly conjugated to poly-SUMO2/3 rather than SUMO1 and the level of these conjugates undergo rhythmic variation, peaking at CT9-CT12. Sumoylation localizes it exclusively to the PML body and promotes its ubiquitination in the PML body, ubiquitin-dependent proteasomal degradation and the transcriptional activity of the CLOCK-BMAL1 heterodimer. Undergoes lysosome-mediated degradation in a time-dependent manner in the liver. As to expression, hair follicles (at protein level). Highly expressed in the adult brain, skeletal muscle and heart.

Its subcellular location is the nucleus. It localises to the cytoplasm. It is found in the PML body. There is conflicting data about the effect of NAD cofactors on activity. PubMed:11441146 suggests that the redox state of the cell can modulate the transcriptional activity of the CLOCK-BMAL1 heterodimer; NADH and NADPH enhance the DNA-binding activity of the heterodimer. PubMed:23229515 reports that NADH and NADPH have no significant effect on DNA-binding activity of the CLOCK-BMAL1 heterodimer. Transcriptional activator which forms a core component of the circadian clock. The circadian clock, an internal time-keeping system, regulates various physiological processes through the generation of approximately 24 hour circadian rhythms in gene expression, which are translated into rhythms in metabolism and behavior. It is derived from the Latin roots 'circa' (about) and 'diem' (day) and acts as an important regulator of a wide array of physiological functions including metabolism, sleep, body temperature, blood pressure, endocrine, immune, cardiovascular, and renal function. Consists of two major components: the central clock, residing in the suprachiasmatic nucleus (SCN) of the brain, and the peripheral clocks that are present in nearly every tissue and organ system. Both the central and peripheral clocks can be reset by environmental cues, also known as Zeitgebers (German for 'timegivers'). The predominant Zeitgeber for the central clock is light, which is sensed by retina and signals directly to the SCN. The central clock entrains the peripheral clocks through neuronal and hormonal signals, body temperature and feeding-related cues, aligning all clocks with the external light/dark cycle. Circadian rhythms allow an organism to achieve temporal homeostasis with its environment at the molecular level by regulating gene expression to create a peak of protein expression once every 24 hours to control when a particular physiological process is most active with respect to the solar day. Transcription and translation of core clock components (CLOCK, NPAS2, BMAL1, BMAL2, PER1, PER2, PER3, CRY1 and CRY2) plays a critical role in rhythm generation, whereas delays imposed by post-translational modifications (PTMs) are important for determining the period (tau) of the rhythms (tau refers to the period of a rhythm and is the length, in time, of one complete cycle). A diurnal rhythm is synchronized with the day/night cycle, while the ultradian and infradian rhythms have a period shorter and longer than 24 hours, respectively. Disruptions in the circadian rhythms contribute to the pathology of cardiovascular diseases, cancer, metabolic syndromes and aging. A transcription/translation feedback loop (TTFL) forms the core of the molecular circadian clock mechanism. Transcription factors, CLOCK or NPAS2 and BMAL1 or BMAL2, form the positive limb of the feedback loop, act in the form of a heterodimer and activate the transcription of core clock genes and clock-controlled genes (involved in key metabolic processes), harboring E-box elements (5'-CACGTG-3') within their promoters. The core clock genes: PER1/2/3 and CRY1/2 which are transcriptional repressors form the negative limb of the feedback loop and interact with the CLOCK|NPAS2-BMAL1|BMAL2 heterodimer inhibiting its activity and thereby negatively regulating their own expression. This heterodimer also activates nuclear receptors NR1D1/2 and RORA/B/G, which form a second feedback loop and which activate and repress BMAL1 transcription, respectively. BMAL1 positively regulates myogenesis and negatively regulates adipogenesis via the transcriptional control of the genes of the canonical Wnt signaling pathway. Plays a role in normal pancreatic beta-cell function; regulates glucose-stimulated insulin secretion via the regulation of antioxidant genes NFE2L2/NRF2 and its targets SESN2, PRDX3, CCLC and CCLM. Negatively regulates the mTORC1 signaling pathway; regulates the expression of MTOR and DEPTOR. Controls diurnal oscillations of Ly6C inflammatory monocytes; rhythmic recruitment of the PRC2 complex imparts diurnal variation to chemokine expression that is necessary to sustain Ly6C monocyte rhythms. Regulates the expression of HSD3B2, STAR, PTGS2, CYP11A1, CYP19A1 and LHCGR in the ovary and also the genes involved in hair growth. Plays an important role in adult hippocampal neurogenesis by regulating the timely entry of neural stem/progenitor cells (NSPCs) into the cell cycle and the number of cell divisions that take place prior to cell-cycle exit. Regulates the circadian expression of CIART and KLF11. The CLOCK-BMAL1 heterodimer regulates the circadian expression of SERPINE1/PAI1, VWF, B3, CCRN4L/NOC, NAMPT, DBP, MYOD1, PPARGC1A, PPARGC1B, SIRT1, GYS2, F7, NGFR, GNRHR, BHLHE40/DEC1, ATF4, MTA1, KLF10 and also genes implicated in glucose and lipid metabolism. Promotes rhythmic chromatin opening, regulating the DNA accessibility of other transcription factors. The NPAS2-BMAL1 heterodimer positively regulates the expression of MAOA, F7 and LDHA and modulates the circadian rhythm of daytime contrast sensitivity by regulating the rhythmic expression of adenylate cyclase type 1 (ADCY1) in the retina. The preferred binding motif for the CLOCK-BMAL1 heterodimer is 5'-CACGTGA-3', which contains a flanking adenine nucleotide at the 3-prime end of the canonical 6-nucleotide E-box sequence. CLOCK specifically binds to the half-site 5'-CAC-3', while BMAL1 binds to the half-site 5'-GTGA-3'. The CLOCK-BMAL1 heterodimer also recognizes the non-canonical E-box motifs 5'-AACGTGA-3' and 5'-CATGTGA-3'. Essential for the rhythmic interaction of CLOCK with ASS1 and plays a critical role in positively regulating CLOCK-mediated acetylation of ASS1. Plays a role in protecting against lethal sepsis by limiting the expression of immune checkpoint protein CD274 in macrophages in a PKM2-dependent manner. Regulates the diurnal rhythms of skeletal muscle metabolism via transcriptional activation of genes promoting triglyceride synthesis (DGAT2) and metabolic efficiency (COQ10B). Its function is as follows. (Microbial infection) Regulates SARS coronavirus-2/SARS-CoV-2 entry and replication in lung epithelial cells probably through the post-transcriptional regulation of ACE2 and interferon-stimulated gene expression. The sequence is that of Basic helix-loop-helix ARNT-like protein 1 from Homo sapiens (Human).